A 1191-amino-acid polypeptide reads, in one-letter code: Putative glycoside hydrolase 22789 (1191 aa).

Residues 173-187 (PSSSGASSVLPSPSA) are compositionally biased toward low complexity. The segment at 173-221 (PSSSGASSVLPSPSAHTPDAATDANHLPNPDPASGRQELTRAGRPARKK) is disordered.

The protein belongs to the glycoside hydrolase-like 3 (GHL3) family.

In Monosiga brevicollis (Choanoflagellate), this protein is Putative glycoside hydrolase 22789.